The sequence spans 366 residues: S-adenosylmethionine:tRNA ribosyltransferase-isomerase (366 aa).

This sequence belongs to the QueA family. Monomer.

The protein resides in the cytoplasm. The enzyme catalyses 7-aminomethyl-7-carbaguanosine(34) in tRNA + S-adenosyl-L-methionine = epoxyqueuosine(34) in tRNA + adenine + L-methionine + 2 H(+). Its pathway is tRNA modification; tRNA-queuosine biosynthesis. In terms of biological role, transfers and isomerizes the ribose moiety from AdoMet to the 7-aminomethyl group of 7-deazaguanine (preQ1-tRNA) to give epoxyqueuosine (oQ-tRNA). This is S-adenosylmethionine:tRNA ribosyltransferase-isomerase from Parasynechococcus marenigrum (strain WH8102).